The sequence spans 370 residues: UDP-N-acetylglucosamine--N-acetylmuramyl-(pentapeptide) pyrophosphoryl-undecaprenol N-acetylglucosamine transferase (370 aa).

UDP-N-acetyl-alpha-D-glucosamine contacts are provided by residues 10–12, Asn-124, Ser-196, Ile-253, and Gln-298; that span reads TGG.

It belongs to the glycosyltransferase 28 family. MurG subfamily.

Its subcellular location is the cell membrane. The catalysed reaction is Mur2Ac(oyl-L-Ala-gamma-D-Glu-L-Lys-D-Ala-D-Ala)-di-trans,octa-cis-undecaprenyl diphosphate + UDP-N-acetyl-alpha-D-glucosamine = beta-D-GlcNAc-(1-&gt;4)-Mur2Ac(oyl-L-Ala-gamma-D-Glu-L-Lys-D-Ala-D-Ala)-di-trans,octa-cis-undecaprenyl diphosphate + UDP + H(+). It functions in the pathway cell wall biogenesis; peptidoglycan biosynthesis. Cell wall formation. Catalyzes the transfer of a GlcNAc subunit on undecaprenyl-pyrophosphoryl-MurNAc-pentapeptide (lipid intermediate I) to form undecaprenyl-pyrophosphoryl-MurNAc-(pentapeptide)GlcNAc (lipid intermediate II). This is UDP-N-acetylglucosamine--N-acetylmuramyl-(pentapeptide) pyrophosphoryl-undecaprenol N-acetylglucosamine transferase from Limosilactobacillus reuteri subsp. reuteri (strain JCM 1112) (Lactobacillus reuteri).